The primary structure comprises 257 residues: Aspartate/glutamate leucyltransferase (257 aa).

This sequence belongs to the R-transferase family. Bpt subfamily.

It localises to the cytoplasm. It catalyses the reaction N-terminal L-glutamyl-[protein] + L-leucyl-tRNA(Leu) = N-terminal L-leucyl-L-glutamyl-[protein] + tRNA(Leu) + H(+). The catalysed reaction is N-terminal L-aspartyl-[protein] + L-leucyl-tRNA(Leu) = N-terminal L-leucyl-L-aspartyl-[protein] + tRNA(Leu) + H(+). In terms of biological role, functions in the N-end rule pathway of protein degradation where it conjugates Leu from its aminoacyl-tRNA to the N-termini of proteins containing an N-terminal aspartate or glutamate. This Nitrobacter winogradskyi (strain ATCC 25391 / DSM 10237 / CIP 104748 / NCIMB 11846 / Nb-255) protein is Aspartate/glutamate leucyltransferase.